The following is a 197-amino-acid chain: MDVGSKEVLMESPPDYSAAPRGRFGIPCCPVHLKRLLIVVVVVVLIVVVIVGALLMGLHMSQKHTEMVLEMSIGAPEAQQRLALSEHLVTTATFSIGSTGLVVYDYQQLLIAYKPAPGTCCYIMKIAPESIPSLEALTRKVHNFQMECSLQAKPAVPTSKLGQAEGRDAGSAPSGGDPAFLGMAVSTLCGEVPLYYI.

Positions 1–23 are excised as a propeptide; that stretch reads MDVGSKEVLMESPPDYSAAPRGR. Residues Cys28 and Cys29 are each lipidated (S-palmitoyl cysteine). The propeptide occupies 59–197; that stretch reads HMSQKHTEMV…LCGEVPLYYI (139 aa). Residues 94–197 enclose the BRICHOS domain; that stretch reads FSIGSTGLVV…LCGEVPLYYI (104 aa). 2 cysteine pairs are disulfide-bonded: Cys120/Cys148 and Cys121/Cys189.

It is found in the secreted. The protein localises to the extracellular space. It localises to the surface film. Pulmonary surfactant associated proteins promote alveolar stability by lowering the surface tension at the air-liquid interface in the peripheral air spaces. The polypeptide is Surfactant protein C (Homo sapiens (Human)).